The chain runs to 155 residues: Small ribosomal subunit protein uS7cz/uS7cy (155 aa).

The protein belongs to the universal ribosomal protein uS7 family. Part of the 30S ribosomal subunit.

It localises to the plastid. The protein localises to the chloroplast. Functionally, one of the primary rRNA binding proteins, it binds directly to 16S rRNA where it nucleates assembly of the head domain of the 30S subunit. This chain is Small ribosomal subunit protein uS7cz/uS7cy (rps7-A), found in Morus indica (Mulberry).